A 211-amino-acid chain; its full sequence is ATP phosphoribosyltransferase (211 aa).

Belongs to the ATP phosphoribosyltransferase family. Short subfamily. As to quaternary structure, heteromultimer composed of HisG and HisZ subunits.

The protein localises to the cytoplasm. It carries out the reaction 1-(5-phospho-beta-D-ribosyl)-ATP + diphosphate = 5-phospho-alpha-D-ribose 1-diphosphate + ATP. Its pathway is amino-acid biosynthesis; L-histidine biosynthesis; L-histidine from 5-phospho-alpha-D-ribose 1-diphosphate: step 1/9. Its function is as follows. Catalyzes the condensation of ATP and 5-phosphoribose 1-diphosphate to form N'-(5'-phosphoribosyl)-ATP (PR-ATP). Has a crucial role in the pathway because the rate of histidine biosynthesis seems to be controlled primarily by regulation of HisG enzymatic activity. The sequence is that of ATP phosphoribosyltransferase (hisG) from Pseudomonas aeruginosa (strain ATCC 15692 / DSM 22644 / CIP 104116 / JCM 14847 / LMG 12228 / 1C / PRS 101 / PAO1).